We begin with the raw amino-acid sequence, 326 residues long: Methionine import ATP-binding protein MetN (326 aa).

Residues 1–226 form the ABC transporter domain; that stretch reads MVFYTIGPQT…PQQPITRQFV (226 aa). 23–30 serves as a coordination point for ATP; sequence GYSGAGKS.

The protein belongs to the ABC transporter superfamily. Methionine importer (TC 3.A.1.24) family. In terms of assembly, the complex is composed of two ATP-binding proteins (MetN), two transmembrane proteins (MetI) and a solute-binding protein (MetQ).

It localises to the cell inner membrane. The enzyme catalyses L-methionine(out) + ATP + H2O = L-methionine(in) + ADP + phosphate + H(+). It carries out the reaction D-methionine(out) + ATP + H2O = D-methionine(in) + ADP + phosphate + H(+). In terms of biological role, part of the ABC transporter complex MetNIQ involved in methionine import. Responsible for energy coupling to the transport system. The sequence is that of Methionine import ATP-binding protein MetN from Erwinia pyrifoliae (strain DSM 12162 / Ep1/96).